The chain runs to 93 residues: Large ribosomal subunit protein eL43 (93 aa).

The C4-type zinc finger occupies 39–60; sequence CEFCGKYGVKRKAVGIWGCKDC.

It belongs to the eukaryotic ribosomal protein eL43 family.

The protein is Large ribosomal subunit protein eL43 (RPL37A) of Brassica rapa subsp. rapa (Turnip).